The primary structure comprises 150 residues: Large ribosomal subunit protein bL9 (150 aa).

It belongs to the bacterial ribosomal protein bL9 family.

Binds to the 23S rRNA. The protein is Large ribosomal subunit protein bL9 of Ralstonia nicotianae (strain ATCC BAA-1114 / GMI1000) (Ralstonia solanacearum).